Here is a 511-residue protein sequence, read N- to C-terminus: Tryptophan 5-halogenase PyrH (511 aa).

Residues glycine 10, alanine 13, serine 36, valine 39, isoleucine 42, valine 44, and alanine 47 each contribute to the FAD site. An L-tryptophan-binding site is contributed by serine 50. Residue lysine 75 is part of the active site. L-tryptophan contacts are provided by proline 93, glutamine 160, and glutamine 163. Residues valine 195 and leucine 345 each contribute to the FAD site. Positions 356 and 357 each coordinate chloride. FAD is bound at residue isoleucine 358. Residues glycine 450 and tyrosine 454 each coordinate L-tryptophan.

It belongs to the flavin-dependent halogenase family. Bacterial tryptophan halogenase subfamily. In terms of assembly, homodimer.

It catalyses the reaction L-tryptophan + FADH2 + chloride + O2 = 5-chloro-L-tryptophan + FAD + 2 H2O. It participates in antibiotic biosynthesis. Functionally, involved in the biosynthesis of the antibiotic compound pyrroindomycin B. Catalyzes the chlorination of tryptophan (Trp) at C5 position to yield 5-chloro-L-tryptophan. It is also able to use bromide ions to generate monobrominated Trp, but the brominating activity is only about 75% of the chlorinating activity. The sequence is that of Tryptophan 5-halogenase PyrH from Streptomyces rugosporus.